We begin with the raw amino-acid sequence, 87 residues long: Phosphoribosyl-ATP pyrophosphatase (87 aa).

It belongs to the PRA-PH family.

It is found in the cytoplasm. The enzyme catalyses 1-(5-phospho-beta-D-ribosyl)-ATP + H2O = 1-(5-phospho-beta-D-ribosyl)-5'-AMP + diphosphate + H(+). It functions in the pathway amino-acid biosynthesis; L-histidine biosynthesis; L-histidine from 5-phospho-alpha-D-ribose 1-diphosphate: step 2/9. The sequence is that of Phosphoribosyl-ATP pyrophosphatase from Leifsonia xyli subsp. xyli (strain CTCB07).